The following is a 2155-amino-acid chain: MAEQMSYLLFGDQSLDTHGFLADFYRQGNPSILAKTFLQRAGDSLRDEIDRLPRCQRDRIPQFRTLQQLNERYHQQTIKFPGIDSALLCITQLAHYIDRSEKEHQDVTAAENTYLSGLCTGLFAATAIASSPSLSSLLPIAVQVSLMAYRVGSHVASLAERLSPSDERSESWTYVVPGAKETDAKPILAEFHETEGISPAAQAYVSAVSASNIAISGPPATLKSLFSKDLFESRPTAIPVYGPYHAPHLHAAANLDKILRLDDEAVTAAFDGSKPRSHIVSCVTGQSFPETDTKSLLKAVVHEILNEPLLFHKALKGSLNSAKEFKGSRVLVIPYGPTQAASTLANLLKAQTKLEVVLRTPPQVSRESNGASIGNHGSSGKCKLAIVGMAGRFPDAASHEKLWELLEKGIDAHRVVPADRFPVETHVDPTGKAINTSHTPYGCWIENPGLFDPRFFNMSPREAFQTDPMQRMALTTAYEALEMSGYVPNRTPSTRLDRIGTFYGQTSDDWREINAAQEVDTYYITGGVRAFGPGRINYHFGFSGPSLNIDTACSSSAAALQVACTSLWAKECDTAIVGGLSCMTNSDIFAGLSRGQFLSKKGNCNTFDNDADGYCRADACASVIVKRLDDALADKDNILAVVLGTSTNHSADAISITHPHGPTQSVLSRAILDEAGVDPLDVDYVEMHGTGTQAGDGTEMVSVTDVFAPANRHRASDRPLYLGAIKSNVGHGEAASGITALSKVLLMMKKNSIPPHVGIKGEINKTFPKDLGARGVNIAFHKTPFQRKDGKPRRIFVNNFSAAGGNTGLLLEDGPRYKTAEADPRSVHVVTVTAKSKSAMIRNAEGLVQWMEQNPSTPVSDVAYTTTARKIQHYWRMNVAAGSLPEAIQAIKERLKSTFVPVSPEQPKVAFMFTGQGSHYAGLGKELYAHYAIFRDAIDEYDQLAGIHGFPSFLPLIDGSEPDVQNLSPVVVQLGLCSFEMALARLWQSWGIQPGAVLGHSLGEYAALHVAGVLSASDTIYLVGARAQLLVNKCTAGTHAMLAVQGSVETVKEALGARAESTNVACINGPRETVLSGASSEVAEIAEQLGGAGFKCTQLKVPFAFHSAQVEPILDDFESLARSVRFETPKVPVISPLLGKLVDNEPINPAYLRNHAREAVNFLGGLVSAQQSGMIDEKTVWLEVGPHPVCANMVKAAFGATTIAVPTLRRNEATYKTLSSSLCTLHSAGLNLDWNEFHRDFDASVRLLDLPSYAFDYKNYWLQYTGDWSLTKNRGALPASTKAIEAPKPKLSTTTVQKVVREEVKGDIAILETESEMTRDDLRLVCSGHMVNGTALTPSSLYGDMAITACEYAYKLLRPDAKNIGCNVSHMEVPKTLIFNGKAKSQVLRMSVKANAAEGFADLSWTSGEGAQKTEHANCKVFFGDNEEWLGEFERVNYLIKSRIDALRAAEQRGDASKIGRGLAYKLFAALVDYDRRYRGMESVILDSETCEATAKVVFQTSPEDGTFHTAPYWIDSVCHISGFILNGSDAIDSREQVFISHGWGSMRFAERLSAEKTYQTYIRMQNVKGSKMMSGDAYIFDGDKLIGIAGDVRFQAIPRKVLNVVLPPQGAAAAGSAPARAPAAAAKPAAKAAPKEKKQVTSANLPAVNKSLTKNSVVAQVMEIIAKETGVSHDELADNIAFSDLGVDSLMGLTISGRLREELELNVDSHAFNDHATVGAFKAFLAQFESADAAMVEENAHSSASSDSADMETESNFTTPSDDSEKDEVKGDAPAADGNVSELQDIVRSTISAEMGVEVEEVIAAPDLAALGMDSLMSLSILGILREKTGLNIPSDLLGHNPSLKDIEKALGIEDKPKRAAPKSAKQEPAKPEPKVQGEAKAHTNPVDNYPHRKATSVLLQGNHRTAKKQLFMIPDGSGSATSYTEISEVGSDVAVWGLFSPFMKTPDEYNCGVYGMATKFIQEMKRRQPEGPYAVAGWSAGGVIAYEIVNQLTKANEEVSNLLIIDAPCPITIEPLPAGLHAWFASIGLLGEGDDAEAKKIPEWLLPHFAASVTALSNYDAEPIPADKCPKVTVIWCEDGVCKLPTDPRPDPYPTGHALFLLDNRSDFGPNRWDEYLDSKKMTFHHMPGNHFSMMHGPLAKQLGGFMRDGMKS.

The segment at 8–245 is N-terminal acylcarrier protein transacylase domain (SAT); that stretch reads LLFGDQSLDT…TAIPVYGPYH (238 aa). The Ketosynthase family 3 (KS3) domain occupies 381 to 813; the sequence is KCKLAIVGMA…GGNTGLLLED (433 aa). Catalysis depends on for beta-ketoacyl synthase activity residues Cys553, His688, and His731. The malonyl-CoA:ACP transacylase (MAT) domain stretch occupies residues 910–1231; sequence AFMFTGQGSH…LCTLHSAGLN (322 aa). The For acyl/malonyl transferase activity role is filled by Ser1001. The interval 1293–1608 is product template (PT) domain; that stretch reads TTTVQKVVRE…PRKVLNVVLP (316 aa). Residues 1297–1428 form an N-terminal hotdog fold region; sequence QKVVREEVKG…CKVFFGDNEE (132 aa). A PKS/mFAS DH domain is found at 1297–1604; it reads QKVVREEVKG…FQAIPRKVLN (308 aa). The Proton acceptor; for dehydratase activity role is filled by His1329. Residues 1455–1604 are C-terminal hotdog fold; sequence DASKIGRGLA…FQAIPRKVLN (150 aa). Asp1516 serves as the catalytic Proton donor; for dehydratase activity. Carrier domains lie at 1653–1730 and 1779–1856; these read LTKN…AQFE and GNVS…GIED. At Ser1690 the chain carries O-(pantetheine 4'-phosphoryl)serine. Positions 1738 to 1782 are disordered; the sequence is EENAHSSASSDSADMETESNFTTPSDDSEKDEVKGDAPAADGNVS. O-(pantetheine 4'-phosphoryl)serine is present on Ser1816. A disordered region spans residues 1855-1892; the sequence is EDKPKRAAPKSAKQEPAKPEPKVQGEAKAHTNPVDNYP. A compositionally biased stretch (basic and acidic residues) spans 1866 to 1883; sequence AKQEPAKPEPKVQGEAKA. A thioesterase (TE) domain region spans residues 1911-2041; that stretch reads QLFMIPDGSG…LGEGDDAEAK (131 aa).

Its pathway is pigment biosynthesis; melanin biosynthesis. In terms of biological role, non-reducing polyketide synthase; part of the gene cluster that mediates the biosynthesis of dihydroxynaphthalene (DHN)-melanin, a bluish-green pigment forming a dark layer in the conidial wall that protects the conidia from UV radiations. The first step of the pathway is the production of the pentaketide 1,3,6,8-tetrahydroxynaphthalene (1,3,6,8-THN or T4HN) by the polyketide synthase PfmaE though condensation of acetyl-CoA with malonyl-CoA. T4HN is not stable and easily oxidizes into the stable form flaviolin. T4HN is also substrate of the hydroxynaphthalene reductase PfmaG to yield scytalone. The scytalone dehydratase PfmaJ then reduces scytalone to 1,3,8-THN. 1,3,8-THN is then substrate of the hydroxynaphthalene reductase PfmaI to yield vermelone. Vermelone is further converted by the multicopper oxidase PfmaD to 1,8-DHN. Finally the laccase PFICI_06862 transforms 1,8-DHN to DHN-melanin. The roles of the 5-oxoprolinase PfmaA and the proline iminopeptidase PfmaB within the cluster have not been elucidated yet. The sequence is that of Conidial pigment polyketide synthase PfmaE from Pestalotiopsis fici (strain W106-1 / CGMCC3.15140).